A 249-amino-acid chain; its full sequence is UDP-2,3-diacylglucosamine hydrolase (249 aa).

Mn(2+)-binding residues include Asp-7, His-9, Asp-40, Asn-78, and His-113. Substrate is bound at residue 78–79 (NR). 5 residues coordinate substrate: Asp-121, Ser-159, Thr-163, Lys-166, and His-194. His-194 and His-196 together coordinate Mn(2+).

This sequence belongs to the LpxH family. The cofactor is Mn(2+).

The protein localises to the cell inner membrane. The catalysed reaction is UDP-2-N,3-O-bis[(3R)-3-hydroxytetradecanoyl]-alpha-D-glucosamine + H2O = 2-N,3-O-bis[(3R)-3-hydroxytetradecanoyl]-alpha-D-glucosaminyl 1-phosphate + UMP + 2 H(+). It functions in the pathway glycolipid biosynthesis; lipid IV(A) biosynthesis; lipid IV(A) from (3R)-3-hydroxytetradecanoyl-[acyl-carrier-protein] and UDP-N-acetyl-alpha-D-glucosamine: step 4/6. Functionally, hydrolyzes the pyrophosphate bond of UDP-2,3-diacylglucosamine to yield 2,3-diacylglucosamine 1-phosphate (lipid X) and UMP by catalyzing the attack of water at the alpha-P atom. Involved in the biosynthesis of lipid A, a phosphorylated glycolipid that anchors the lipopolysaccharide to the outer membrane of the cell. The sequence is that of UDP-2,3-diacylglucosamine hydrolase from Pseudomonas fluorescens (strain SBW25).